We begin with the raw amino-acid sequence, 299 residues long: tRNA dimethylallyltransferase (299 aa).

Residue 8–15 participates in ATP binding; sequence GPTASGKT. A substrate-binding site is contributed by 10–15; it reads TASGKT. The segment at 33-36 is interaction with substrate tRNA; sequence DSQQ.

Belongs to the IPP transferase family. In terms of assembly, monomer. Requires Mg(2+) as cofactor.

The enzyme catalyses adenosine(37) in tRNA + dimethylallyl diphosphate = N(6)-dimethylallyladenosine(37) in tRNA + diphosphate. Catalyzes the transfer of a dimethylallyl group onto the adenine at position 37 in tRNAs that read codons beginning with uridine, leading to the formation of N6-(dimethylallyl)adenosine (i(6)A). This chain is tRNA dimethylallyltransferase, found in Anaeromyxobacter dehalogenans (strain 2CP-C).